We begin with the raw amino-acid sequence, 554 residues long: Calcium-dependent protein kinase 3 (554 aa).

The interval 30–55 (KKKSSNKSIKSQHKFEGSKIANKNNE) is disordered. The region spanning 110 to 365 (NLSEEPLGKG…ASEALKHPWF (256 aa)) is the Protein kinase domain. ATP contacts are provided by residues 116–124 (LGKGTYGCV) and lysine 139. Aspartate 230 serves as the catalytic Proton acceptor. Positions 385–393 (NFKNYALLL) match the J domain autoinhibitory motif motif. Positions 385 to 420 (NFKNYALLLKLQKLAMTIIAQQSNDYDLQQLKTVFL) are j domain. The short motif at 394 to 403 (KLQKLAMTII) is the J domain EF-hand interaction motif element. 4 EF-hand domains span residues 410 to 445 (YDLQ…SGLK), 448 to 479 (QNFD…DRKH), 480 to 515 (LSKK…GNKK), and 521 to 554 (KDVN…KLKY). 15 residues coordinate Ca(2+): aspartate 458, aspartate 460, serine 462, arginine 464, glutamate 469, aspartate 493, aspartate 495, aspartate 497, glutamate 499, glutamate 504, aspartate 534, asparagine 536, aspartate 538, lysine 540, and glutamate 545.

Belongs to the protein kinase superfamily. Ser/Thr protein kinase family. CDPK subfamily. The cofactor is Mg(2+).

It is found in the cytoplasm. It carries out the reaction L-seryl-[protein] + ATP = O-phospho-L-seryl-[protein] + ADP + H(+). It catalyses the reaction L-threonyl-[protein] + ATP = O-phospho-L-threonyl-[protein] + ADP + H(+). Activated by calcium. Upon calcium binding to the EF-hand domain 2, the C-terminus of the junction domain (J domain) undergoes a conformational change which results in the dissociation of the pseudo-substrate inhibitory motif from the catalytic domain. This, in turn, may facilitate the autophosphorylation of the activation loop at Thr-271, which leads to the kinase activation. Its function is as follows. Calcium-dependent protein kinase which acts as a sensor and effector of intracellular Ca(2+) levels probably in part downstream of cGMP-activated PKG kinase. In the mosquito midgut, regulates the gliding motility of the ookinete which is essential for the ookinete to invade the midgut epithelium. However, another study showed that while required for ookinete invasion of the midgut epithelium, is not required for ookinete gliding motility. The protein is Calcium-dependent protein kinase 3 of Plasmodium berghei (strain Anka).